The following is a 227-amino-acid chain: 2,3-bisphosphoglycerate-dependent phosphoglycerate mutase (227 aa).

Substrate-binding positions include 8–15 (RHGKSVWN), 21–22 (TG), Arg58, 110–113 (ERMY), Lys121, 137–138 (RR), and 181–182 (GN). His9 acts as the Tele-phosphohistidine intermediate in catalysis. Catalysis depends on Glu110, which acts as the Proton donor/acceptor.

The protein belongs to the phosphoglycerate mutase family. BPG-dependent PGAM subfamily.

It catalyses the reaction (2R)-2-phosphoglycerate = (2R)-3-phosphoglycerate. It participates in carbohydrate degradation; glycolysis; pyruvate from D-glyceraldehyde 3-phosphate: step 3/5. Functionally, catalyzes the interconversion of 2-phosphoglycerate and 3-phosphoglycerate. The protein is 2,3-bisphosphoglycerate-dependent phosphoglycerate mutase of Chlamydia caviae (strain ATCC VR-813 / DSM 19441 / 03DC25 / GPIC) (Chlamydophila caviae).